The primary structure comprises 1347 residues: Spermatogenesis-associated protein 31A1 (1347 aa).

Residues 23–43 (PWVLDIFLTLVFALGFFFLLL) form a helical membrane-spanning segment. 6 disordered regions span residues 55–89 (PSPS…ECPR), 106–235 (GPHL…STLI), 373–397 (EQDT…GPQK), 628–658 (DESP…EAQK), 899–955 (PRGI…REAV), and 1085–1160 (HEEP…PPSV). Over residues 60-82 (GKRKCPVGRRRRPRGRMKNHSLR) the composition is skewed to basic residues. Polar residues predominate over residues 165-178 (LASTPSPGPMTTSV). Over residues 198–222 (PEPPALFPHPPHTPDPLACSPPPPK) the composition is skewed to pro residues. Polar residues-rich tracts occupy residues 631–651 (PGTS…STGE) and 927–948 (LTYS…SSKA). 2 stretches are compositionally biased toward basic and acidic residues: residues 1108–1127 (HKSE…RLEG) and 1137–1146 (RKTEDTHQDE).

It belongs to the SPATA31 family.

It localises to the membrane. May play a role in spermatogenesis. The chain is Spermatogenesis-associated protein 31A1 from Homo sapiens (Human).